A 203-amino-acid polypeptide reads, in one-letter code: NADH-quinone oxidoreductase subunit C (203 aa).

It belongs to the complex I 30 kDa subunit family. As to quaternary structure, NDH-1 is composed of 14 different subunits. Subunits NuoB, C, D, E, F, and G constitute the peripheral sector of the complex.

The protein resides in the cell inner membrane. The enzyme catalyses a quinone + NADH + 5 H(+)(in) = a quinol + NAD(+) + 4 H(+)(out). Its function is as follows. NDH-1 shuttles electrons from NADH, via FMN and iron-sulfur (Fe-S) centers, to quinones in the respiratory chain. The immediate electron acceptor for the enzyme in this species is believed to be ubiquinone. Couples the redox reaction to proton translocation (for every two electrons transferred, four hydrogen ions are translocated across the cytoplasmic membrane), and thus conserves the redox energy in a proton gradient. This is NADH-quinone oxidoreductase subunit C from Polaromonas sp. (strain JS666 / ATCC BAA-500).